A 206-amino-acid chain; its full sequence is HTH-type transcriptional regulator BetI (206 aa).

The 61-residue stretch at 8–68 (PLRRKALVDA…ETIRSLLRDL (61 aa)) folds into the HTH tetR-type domain. A DNA-binding region (H-T-H motif) is located at residues 31–50 (TMSDIAREAGVSAALAHHYF).

It functions in the pathway amine and polyamine biosynthesis; betaine biosynthesis via choline pathway [regulation]. Repressor involved in the biosynthesis of the osmoprotectant glycine betaine. It represses transcription of the choline transporter BetT and the genes of BetAB involved in the synthesis of glycine betaine. The protein is HTH-type transcriptional regulator BetI of Agrobacterium fabrum (strain C58 / ATCC 33970) (Agrobacterium tumefaciens (strain C58)).